A 203-amino-acid chain; its full sequence is NADH-quinone oxidoreductase subunit C (203 aa).

Belongs to the complex I 30 kDa subunit family. In terms of assembly, NDH-1 is composed of 14 different subunits. Subunits NuoB, C, D, E, F, and G constitute the peripheral sector of the complex.

Its subcellular location is the cell inner membrane. The enzyme catalyses a quinone + NADH + 5 H(+)(in) = a quinol + NAD(+) + 4 H(+)(out). Functionally, NDH-1 shuttles electrons from NADH, via FMN and iron-sulfur (Fe-S) centers, to quinones in the respiratory chain. The immediate electron acceptor for the enzyme in this species is believed to be ubiquinone. Couples the redox reaction to proton translocation (for every two electrons transferred, four hydrogen ions are translocated across the cytoplasmic membrane), and thus conserves the redox energy in a proton gradient. In Delftia acidovorans (strain DSM 14801 / SPH-1), this protein is NADH-quinone oxidoreductase subunit C.